The primary structure comprises 215 residues: uncharacterized protein (215 aa).

Residues 25–48 (LKSASPGPAPASQQASSFGSAPAQ) form a disordered region. The segment covering 27–47 (SASPGPAPASQQASSFGSAPA) has biased composition (low complexity).

This is an uncharacterized protein from Homo sapiens (Human).